The following is a 440-amino-acid chain: Histidinol dehydrogenase homolog 2 (440 aa).

H265 contacts Zn(2+). Residues E333 and H334 each act as proton acceptor in the active site. H426 serves as a coordination point for Zn(2+).

This sequence belongs to the histidinol dehydrogenase family. Zn(2+) serves as cofactor.

The protein is Histidinol dehydrogenase homolog 2 of Mesorhizobium japonicum (strain LMG 29417 / CECT 9101 / MAFF 303099) (Mesorhizobium loti (strain MAFF 303099)).